A 217-amino-acid polypeptide reads, in one-letter code: Probable transaldolase (217 aa).

Lysine 83 acts as the Schiff-base intermediate with substrate in catalysis.

This sequence belongs to the transaldolase family. Type 3B subfamily.

It localises to the cytoplasm. The catalysed reaction is D-sedoheptulose 7-phosphate + D-glyceraldehyde 3-phosphate = D-erythrose 4-phosphate + beta-D-fructose 6-phosphate. Its pathway is carbohydrate degradation; pentose phosphate pathway; D-glyceraldehyde 3-phosphate and beta-D-fructose 6-phosphate from D-ribose 5-phosphate and D-xylulose 5-phosphate (non-oxidative stage): step 2/3. Functionally, transaldolase is important for the balance of metabolites in the pentose-phosphate pathway. The polypeptide is Probable transaldolase (Clostridium botulinum (strain Okra / Type B1)).